A 122-amino-acid polypeptide reads, in one-letter code: MIQQETYLNVADNSGAKKLRVIRVIGGFHKKYGTVGDIVVCSVREAIPNSDVKKGDVVRAVIVRTKKEIRRSDGTYIRFDDNAAVLIDKFNAPRGTRIFGPVARELREKGFMKIVSLAPEVW.

This sequence belongs to the universal ribosomal protein uL14 family. In terms of assembly, part of the 50S ribosomal subunit. Forms a cluster with proteins L3 and L19. In the 70S ribosome, L14 and L19 interact and together make contacts with the 16S rRNA in bridges B5 and B8.

In terms of biological role, binds to 23S rRNA. Forms part of two intersubunit bridges in the 70S ribosome. The protein is Large ribosomal subunit protein uL14 of Thermotoga petrophila (strain ATCC BAA-488 / DSM 13995 / JCM 10881 / RKU-1).